We begin with the raw amino-acid sequence, 326 residues long: Microtubule-associated protein RP/EB family member 2 (326 aa).

Phosphoserine is present on Ser9. A Calponin-homology (CH) domain is found at 56-158; sequence TMSRHDIIAW…FIQWFKKFYD (103 aa). Phosphotyrosine is present on Tyr166. Disordered stretches follow at residues 170 to 239 and 298 to 326; these read EARQ…DKDL and ASDE…QEEY. Residues 186-326 form a DCTN1-binding region; that stretch reads QIFNLPKKSH…EQQPQQQEEY (141 aa). The segment covering 199–233 has biased composition (low complexity); sequence SPTAGAAKSSPASKPGSTPSRPSSAKRASSSGSAS. A phosphoserine mark is found at Ser218 and Ser235. The 71-residue stretch at 235 to 305 folds into the EB1 C-terminal domain; it reads SDKDLETQVI…LYASDEHEGH (71 aa). An APC-binding region spans residues 258–301; it reads EGVEKERDFYFGKLREIELLCQEHGQENDDLVQRLMDVLYASDE. A compositionally biased stretch (basic and acidic residues) spans 299–316; that stretch reads SDEHEGHPEEPEAEEQVH. Residues 317 to 326 are compositionally biased toward low complexity; it reads EQQPQQQEEY.

It belongs to the MAPRE family. In terms of assembly, interacts with DCTN1. Interacts with APC (via C-terminal). Interacts with monomeric and polymerized tubulin. Interacts with SLAIN1. Interacts (via the N-terminal region) with BAG1. Interacts with ASB14. Interacts with HAX1; this interaction is essential for epidermal cell migration. Post-translationally, phosphorylated at Ser-235 by CK2 leading to enhanced cell adhesion. Phosphorylated by CDK1 and AURKB during mitosis reduces the binding affinity of MAPRE2 for microtubules. Ubiquitinated in an ASB14-dependent manner; leading to proteasomal degradation.

Its subcellular location is the cytoplasm. The protein localises to the cytoskeleton. Its function is as follows. Adapter protein that is involved in microtubule polymerization, and spindle function by stabilizing microtubules and anchoring them at centrosomes. Therefore, ensures mitotic progression and genome stability. Acts as a central regulator of microtubule reorganization in apico-basal epithelial differentiation. Plays a role during oocyte meiosis by regulating microtubule dynamics. Participates in neurite growth by interacting with plexin B3/PLXNB3 and microtubule reorganization during apico-basal epithelial differentiation. Also plays an essential role for cell migration and focal adhesion dynamics. Mechanistically, recruits HAX1 to microtubules in order to regulate focal adhesion dynamics. The protein is Microtubule-associated protein RP/EB family member 2 (MAPRE2) of Bos taurus (Bovine).